Here is a 412-residue protein sequence, read N- to C-terminus: MLPQNKDQVLPQTSVLPGRPTWGFSQLVDSSPHNLQPLSPHQGLPPSQPPFSSTQSRRPSSPPPASPSPGFQFGSCDSNSDFAPHPYSPSLPSSPTFFHQNYLSLPRPRASSPSNHWLYPSPPLTPSFSPSQPQNSSLPHSPCQSPSHPEELHSSTLTSPGPSPPSHRLHSNRQTWRWHQYRDTGSGSPGVVERCVPSEKDPAQFRDPGALAQALVVQLGHRRIAHDLRLLLLQHLWLGRTGQAPVVEYPICLVCLRPRSPSCPLPRYRTGPRLLAFPQLLPCVQGQESGPLRIGIGFGLRLPQGQARALHLLPEKRPKEAGPQGKATQACGHQLPASQPPAAQARADPVPGTPSQTRSFRSAGLQSPNSPRCFSGPPPRAPKQVTTSLKPRPCPGPKRPVSLELILQKSSV.

2 stretches are compositionally biased toward polar residues: residues 1–15 (MLPQ…QTSV) and 23–39 (GFSQ…QPLS). Disordered regions lie at residues 1 to 88 (MLPQ…HPYS), 123 to 174 (PLTP…SNRQ), and 317 to 412 (RPKE…KSSV). Low complexity-rich tracts occupy residues 50–59 (PFSSTQSRRP), 126–142 (PSFS…PHSP), and 334–350 (QLPA…ADPV). Over residues 353–372 (TPSQTRSFRSAGLQSPNSPR) the composition is skewed to polar residues.

The protein is Proline-rich protein 30 (PRR30) of Homo sapiens (Human).